A 222-amino-acid chain; its full sequence is Sororin-like protein (222 aa).

Residues 1–189 form a disordered region; sequence MEAPRSVGGR…VKQEKEDPVS (189 aa). Low complexity predominate over residues 24 to 33; it reads SRSSQQSSSS. Residues 47–60 are compositionally biased toward basic and acidic residues; that stretch reads RLVEQTTLKEKPKD. Over residues 88-105 the composition is skewed to low complexity; that stretch reads ADLASPASAPSRPQTSRS. The short motif at 155 to 162 is the Nuclear localization signal element; the sequence is GKKTRQAS. Residues 167 to 179 are compositionally biased toward basic residues; the sequence is KTLKVAPKKRQRT. The tract at residues 192 to 214 is C-terminal Sororin domain; the sequence is CQDYIEKQKAYFAEIDAFELPVE.

Belongs to the sororin family.

The protein localises to the nucleus. Regulator of sister chromatid cohesion in mitosis stabilizing cohesin complex association with chromatin. Antagonizes the action of WAPL proteins (WAPL1 and WAPL2) which stimulates cohesin dissociation from chromatin, particularly during somatic division in root cells and meiocytes during anaphase I. Required for centromeric sister chromatid cohesion during male meiosis (microsporogenesis). Cohesion ensures that chromosome partitioning is accurate in dividing cells and may play an important role in DNA repair. The chain is Sororin-like protein from Arabidopsis thaliana (Mouse-ear cress).